A 292-amino-acid polypeptide reads, in one-letter code: High-affinity heme uptake system protein IsdE (292 aa).

The first 19 residues, 1-19 (MRIIKYLTILVISVVILTS), serve as a signal peptide directing secretion. Cys20 is lipidated: N-palmitoyl cysteine. Cys20 carries the S-diacylglycerol cysteine lipid modification. In terms of domain architecture, Fe/B12 periplasmic-binding spans 35–291 (RIVPTTVALT…QLYDLFYKDK (257 aa)). Positions 41, 42, 60, 61, 78, and 229 each coordinate heme.

Belongs to the bacterial solute-binding protein 8 family. Heme b serves as cofactor.

It is found in the cell membrane. Involved in heme (porphyrin) scavenging. Binds Fe(2+) and Fe(3+) heme but the largest fraction is Fe(2+) heme. Functions as a high-affinity heme binding protein and probably has a role in relaying heme-iron from cell wall-anchored isd proteins receptors to the probable permease IsdF. The polypeptide is High-affinity heme uptake system protein IsdE (isdE) (Staphylococcus aureus (strain MRSA252)).